Consider the following 173-residue polypeptide: Translocon-associated protein subunit delta (173 aa).

An N-terminal signal peptide occupies residues 1-23; sequence MAAMASLGALALLLLSSLSRCSA. Over 24 to 144 the chain is Lumenal; it reads EACLEPQITP…SVDHRGTWNG (121 aa). Residues Cys-26 and Cys-57 are joined by a disulfide bond. A Glycyl lysine isopeptide (Lys-Gly) (interchain with G-Cter in ubiquitin) cross-link involves residue Lys-73. A helical membrane pass occupies residues 145 to 165; that stretch reads PWVSTEVLAAAIGLVIYYLAF. At 166–173 the chain is on the cytoplasmic side; sequence SAKSHIQA.

Belongs to the TRAP-delta family. In terms of assembly, heterotetramer of TRAP-alpha, TRAP-beta, TRAP-delta and TRAP-gamma.

The protein resides in the endoplasmic reticulum membrane. Its function is as follows. TRAP proteins are part of a complex whose function is to bind calcium to the ER membrane and thereby regulate the retention of ER resident proteins. The protein is Translocon-associated protein subunit delta (SSR4) of Homo sapiens (Human).